Reading from the N-terminus, the 105-residue chain is Met repressor (105 aa).

It belongs to the MetJ family. In terms of assembly, homodimer.

The protein resides in the cytoplasm. Functionally, this regulatory protein, when combined with SAM (S-adenosylmethionine) represses the expression of the methionine regulon and of enzymes involved in SAM synthesis. The chain is Met repressor from Actinobacillus succinogenes (strain ATCC 55618 / DSM 22257 / CCUG 43843 / 130Z).